A 91-amino-acid polypeptide reads, in one-letter code: Small integral membrane protein 13 (91 aa).

Residues 10-30 form a helical membrane-spanning segment; the sequence is LVFVATLLIVLLLMVCGWYFV. Residues 47 to 91 form a disordered region; that stretch reads DTGSQEGDHEPSGSETEEDTSSSPHRIRSARQRRAPADEGHRPLT. Phosphoserine occurs at positions 58 and 60. Thr62 carries the phosphothreonine modification. Ser69 is subject to Phosphoserine. Positions 71-80 are enriched in basic residues; it reads HRIRSARQRR. The segment covering 81–91 has biased composition (basic and acidic residues); the sequence is APADEGHRPLT.

It belongs to the SMIM13 family.

It localises to the membrane. The chain is Small integral membrane protein 13 (SMIM13) from Homo sapiens (Human).